A 227-amino-acid polypeptide reads, in one-letter code: LexA repressor (227 aa).

A DNA-binding region (H-T-H motif) is located at residues 25–45; that stretch reads FDEMKDALDLRSKSGIHRLIT. Catalysis depends on for autocatalytic cleavage activity residues Ser-148 and Lys-186.

It belongs to the peptidase S24 family. Homodimer.

It catalyses the reaction Hydrolysis of Ala-|-Gly bond in repressor LexA.. Represses a number of genes involved in the response to DNA damage (SOS response), including recA and lexA. In the presence of single-stranded DNA, RecA interacts with LexA causing an autocatalytic cleavage which disrupts the DNA-binding part of LexA, leading to derepression of the SOS regulon and eventually DNA repair. The polypeptide is LexA repressor (Cereibacter sphaeroides (strain ATCC 17029 / ATH 2.4.9) (Rhodobacter sphaeroides)).